The primary structure comprises 97 residues: Large ribosomal subunit protein eL21 (97 aa).

The protein belongs to the eukaryotic ribosomal protein eL21 family.

The protein is Large ribosomal subunit protein eL21 of Methanoculleus marisnigri (strain ATCC 35101 / DSM 1498 / JR1).